We begin with the raw amino-acid sequence, 316 residues long: Na(+)-translocating NADH-quinone reductase subunit C (316 aa).

A helical transmembrane segment spans residues 13 to 33 (WYIILFIFVLSLIAGTLLSSV). T280 carries the FMN phosphoryl threonine modification.

Belongs to the NqrC family. Composed of six subunits; NqrA, NqrB, NqrC, NqrD, NqrE and NqrF. FMN serves as cofactor.

It is found in the cell inner membrane. The enzyme catalyses a ubiquinone + n Na(+)(in) + NADH + H(+) = a ubiquinol + n Na(+)(out) + NAD(+). NQR complex catalyzes the reduction of ubiquinone-1 to ubiquinol by two successive reactions, coupled with the transport of Na(+) ions from the cytoplasm to the periplasm. NqrA to NqrE are probably involved in the second step, the conversion of ubisemiquinone to ubiquinol. In Chlamydia trachomatis serovar D (strain ATCC VR-885 / DSM 19411 / UW-3/Cx), this protein is Na(+)-translocating NADH-quinone reductase subunit C.